Reading from the N-terminus, the 590-residue chain is Guanylate-binding protein 5 (590 aa).

Residues 1 to 306 are NLRP3-binding; it reads MAPEIHMPEP…LTYVDAINSG (306 aa). The tract at residues 1–310 is GTPase domain (Globular); the sequence is MAPEIHMPEP…DAINSGALPS (310 aa). Residues 35–277 enclose the GB1/RHD3-type G domain; sequence TQPVVVVAIV…FCSHIFTQSK (243 aa). Residues 45-52, 67-69, 182-183, and L246 contribute to the GTP site; these read GLYRTGKS, VGS, and RD. Residues 529-590 form a required for tetramerization, but not for dimerization region; it reads QIALEKARVA…RRHHHDCVIS (62 aa). At C587 the chain carries Cysteine methyl ester. A lipid anchor (S-geranylgeranyl cysteine) is attached at C587. Residues 588-590 constitute a propeptide, removed in mature form; sequence VIS.

The protein belongs to the TRAFAC class dynamin-like GTPase superfamily. GB1/RHD3 GTPase family. GB1 subfamily. Homodimer; homodimerizes upon GTP-binding, forming a close face-to-face dimer. Heterodimer with other family members, including GBP1, GBP2, GBP3 and GBP4. May also form tetramers (dimer of dimers) in the presence of GTP. Interacts with NLRP3, possibly in its tetrameric form, and promotes PYCARD/ASC polymerization. In terms of processing, isoprenylation is required for proper subcellular location. Low expression, if any, in many tissues in the absence of stimulation.

It localises to the cytoplasmic vesicle membrane. The protein resides in the golgi apparatus membrane. Its subcellular location is the cytoplasm. The catalysed reaction is GTP + H2O = GDP + phosphate + H(+). In terms of biological role, interferon (IFN)-inducible GTPase that plays important roles in innate immunity against a diverse range of bacterial, viral and protozoan pathogens. Hydrolyzes GTP, but in contrast to other family members, does not produce GMP. Following infection, recruited to the pathogen-containing vacuoles or vacuole-escaped bacteria and acts as a positive regulator of inflammasome assembly by promoting the release of inflammasome ligands from bacteria. Acts by promoting lysis of pathogen-containing vacuoles, releasing pathogens into the cytosol. Following pathogen release in the cytosol, promotes recruitment of proteins that mediate bacterial cytolysis, such as Gm12250/Irgb10: this liberates ligands that are detected by inflammasomes, such as lipopolysaccharide (LPS) that activates the non-canonical CASP4/CASP11 inflammasome or double-stranded DNA (dsDNA) that activates the AIM2 inflammasome. As an activator of NLRP3 inflammasome assembly: promotes selective NLRP3 inflammasome assembly in response to microbial and soluble, but not crystalline, agents. Independently of its GTPase activity, acts as an inhibitor of various viruses infectivity by inhibiting FURIN-mediated maturation of viral envelope proteins. This is Guanylate-binding protein 5 from Mus musculus (Mouse).